We begin with the raw amino-acid sequence, 952 residues long: Pentatricopeptide repeat-containing protein At5g04810, chloroplastic (952 aa).

The transit peptide at 1 to 60 (MDNGGSVLSLSAPHFPYSATILRRHSPVASISFSLKQPPPQPPEPPESPPDLRRPEKSIG) directs the protein to the chloroplast. Disordered stretches follow at residues 30-95 (SISF…VSPL) and 115-163 (LRLS…EFRQ). Residues 37 to 49 (QPPPQPPEPPESP) are compositionally biased toward pro residues. Positions 58–68 (SIGSSSSSSSP) are enriched in low complexity. Residues 122–133 (SPPPPPPPPPPV) are compositionally biased toward pro residues. Over residues 137 to 163 (TQFRDEFRSDTKPPEEETRNPQQEFRQ) the composition is skewed to basic and acidic residues. The RRM domain maps to 167–238 (IFVGNLPTWI…VEFHGRILTV (72 aa)). Residues 259-280 (EGEEDTKMSNKSSWHQEREGSR) show a composition bias toward basic and acidic residues. The disordered stretch occupies residues 259 to 281 (EGEEDTKMSNKSSWHQEREGSRK). 15 PPR repeats span residues 308 to 342 (SRTEFGLMVKFYGRRGDMHRARETFERMRARGITP), 343 to 377 (TSRIYTSLIHAYAVGRDMDEALSCVRKMKEEGIEM), 378 to 412 (SLVTYSVIVGGFSKAGHAEAADYWFDEAKRIHKTL), 413 to 447 (NASIYGKIIYAHCQTCNMERAEALVREMEEEGIDA), 448 to 482 (PIAIYHTMMDGYTMVADEKKGLVVFKRLKECGFTP), 483 to 517 (TVVTYGCLINLYTKVGKISKALEVSRVMKEEGVKH), 518 to 552 (NLKTYSMMINGFVKLKDWANAFAVFEDMVKEGMKP), 553 to 587 (DVILYNNIISAFCGMGNMDRAIQTVKEMQKLRHRP), 588 to 622 (TTRTFMPIIHGYAKSGDMRRSLEVFDMMRRCGCVP), 623 to 657 (TVHTFNGLINGLVEKRQMEKAVEILDEMTLAGVSA), 658 to 692 (NEHTYTKIMQGYASVGDTGKAFEYFTRLQNEGLDV), 693 to 727 (DIFTYEALLKACCKSGRMQSALAVTKEMSARNIPR), 728 to 762 (NSFVYNILIDGWARRGDVWEAADLIQQMKKEGVKP), 763 to 797 (DIHTYTSFISACSKAGDMNRATQTIEEMEALGVKP), and 798 to 832 (NIKTYTTLIKGWARASLPEKALSCYEEMKAMGIKP). Residues 918–952 (DQVSDVDSDEDDVDGEDGEDDEDVNSVSDLLSPYK) are disordered. The span at 921 to 941 (SDVDSDEDDVDGEDGEDDEDV) shows a compositional bias: acidic residues.

Belongs to the PPR family. P subfamily.

The protein localises to the plastid. The protein resides in the chloroplast. Functionally, may play a role in the plastid ribosome biogenesis. In Arabidopsis thaliana (Mouse-ear cress), this protein is Pentatricopeptide repeat-containing protein At5g04810, chloroplastic (PPR4).